A 461-amino-acid polypeptide reads, in one-letter code: Cytochrome c biogenesis protein CcsB (461 aa).

The next 3 helical transmembrane spans lie at leucine 32–isoleucine 52, threonine 91–threonine 111, and isoleucine 178–alanine 198.

Belongs to the Ccs1/CcsB family. As to quaternary structure, may interact with CcsA.

The protein localises to the cellular thylakoid membrane. Functionally, required during biogenesis of c-type cytochromes (cytochrome c6 and cytochrome f) at the step of heme attachment. This Trichormus variabilis (strain ATCC 29413 / PCC 7937) (Anabaena variabilis) protein is Cytochrome c biogenesis protein CcsB.